The chain runs to 551 residues: GMP synthase [glutamine-hydrolyzing] (551 aa).

Positions 1-28 (MTSSPTAAARTEGEAAPTVPTQVESGTA) are disordered. Residues 19–28 (VPTQVESGTA) are compositionally biased toward polar residues. Positions 37-227 (MVAILDFGSQ…VYHICGCEPE (191 aa)) constitute a Glutamine amidotransferase type-1 domain. The Nucleophile role is filled by Cys114. Active-site residues include His201 and Glu203. Positions 228 to 426 (WTTAAFIEEA…LGLPEEIVQR (199 aa)) constitute a GMPS ATP-PPase domain. 255–261 (SGGVDSS) is an ATP binding site.

Homodimer.

It catalyses the reaction XMP + L-glutamine + ATP + H2O = GMP + L-glutamate + AMP + diphosphate + 2 H(+). It functions in the pathway purine metabolism; GMP biosynthesis; GMP from XMP (L-Gln route): step 1/1. In terms of biological role, catalyzes the synthesis of GMP from XMP. The chain is GMP synthase [glutamine-hydrolyzing] from Gloeobacter violaceus (strain ATCC 29082 / PCC 7421).